The following is a 328-amino-acid chain: Probable fused nickel transport protein LarMN (328 aa).

8 consecutive transmembrane segments (helical) span residues 8-28, 42-62, 75-95, 103-123, 138-158, 187-207, 229-249, and 296-316; these read LSPA…TVAV, LPML…NLPI, LLAV…TLLL, GGIL…PFVG, LGLA…AGIE, MLTA…LLVF, PWIA…LASN, and PVSV…LLLI.

Belongs to the CbiM family. NikM subfamily. In terms of assembly, may form an energy-coupling factor (ECF) transporter complex composed of an ATP-binding protein (A component, LarO), a transmembrane protein (T component, LarQ) and a fused possible substrate-capture protein (S component, LarMN) of unknown stoichiometry.

It is found in the cell membrane. Functionally, probably part of the energy-coupling factor (ECF) transporter complex LarMNQO involved in nickel import. The protein is Probable fused nickel transport protein LarMN of Lactiplantibacillus plantarum (strain ATCC BAA-793 / NCIMB 8826 / WCFS1) (Lactobacillus plantarum).